The chain runs to 226 residues: AN1-type zinc finger protein 3 homolog (226 aa).

The segment at 12–44 (PSLPPRCPCGFWGSSKTMNLCSKCFADFQKKQP) adopts an A20-type zinc-finger fold. 4 residues coordinate Zn(2+): Cys-18, Cys-20, Cys-32, and Cys-35. A disordered region spans residues 42–149 (KQPDEDTAPS…DRPDNSSRSK (108 aa)). 3 stretches are compositionally biased toward polar residues: residues 49-59 (APSTSSSQSDL), 67-92 (DNGNTSIPTPTVNPTQQLPTELNVDS), and 105-114 (AHVSLTTPSK). The span at 134 to 146 (RLLDSGDRPDNSS) shows a compositional bias: basic and acidic residues. Residues 150-199 (QKSRRRCFRCQIKLELVQQELGSCRCGYVFCMLHRLPEQHDCTFDHMGRG) form an AN1-type zinc finger. Residues Cys-156, Cys-159, Cys-173, Cys-175, Cys-180, His-183, His-189, and Cys-191 each contribute to the Zn(2+) site.

This Xenopus laevis (African clawed frog) protein is AN1-type zinc finger protein 3 homolog (zfand3).